Here is a 174-residue protein sequence, read N- to C-terminus: FMN reductase (NADH) SmoA (174 aa).

This sequence belongs to the non-flavoprotein flavin reductase family.

It carries out the reaction FMNH2 + NAD(+) = FMN + NADH + 2 H(+). Its function is as follows. Part of the sulfoquinovose monooxygenase (sulfo-SMO) pathway, a D-sulfoquinovose degradation pathway that enables the complete utilization of all carbons within sulfoquinovose (SQ) with concomitant production of inorganic sulfite. Catalyzes the NADH-dependent reduction of FMN. FMNH(2) is then transferred to the sulfoquinovose monooxygenase SmoC. The polypeptide is FMN reductase (NADH) SmoA (Agrobacterium fabrum (strain C58 / ATCC 33970) (Agrobacterium tumefaciens (strain C58))).